The following is a 231-amino-acid chain: MKLLTFCSFKGGAGKTTALMGLCAALASDGRRVALFDADENRPLTRWKENALRSNTWDSFCEVYAAEEMSLLEAAYEDAELQGFDYALADTHGGSSELNNTIIASSNLLLIPTMLTPLDIDEALSTYRYVIELLLSENLAIPTAVLRQRVPVGRLTTSQRAMSDMLASLPVVQSPMHERDAFAAMKERGMLHLTLLNMRTDPSMRLLERNLRIAMEELVTISKLVGEALER.

This Rhizobium rhizogenes (Agrobacterium rhizogenes) protein is Protein virC1 (virC1).